Consider the following 586-residue polypeptide: CTP synthase 2 (586 aa).

One can recognise a Glutamine amidotransferase type-1 domain in the interval 300-554 (SIALVGKYTK…LAATGNLNAY (255 aa)). Active-site for GATase activity residues include cysteine 399, histidine 526, and glutamate 528. A disordered region spans residues 563–586 (SSDRYSDASDDSFSEPRIAELEIS). 3 positions are modified to phosphoserine: serine 568, serine 571, and serine 574.

Belongs to the CTP synthase family.

It carries out the reaction UTP + L-glutamine + ATP + H2O = CTP + L-glutamate + ADP + phosphate + 2 H(+). It functions in the pathway pyrimidine metabolism; CTP biosynthesis via de novo pathway; CTP from UDP: step 2/2. Functionally, catalyzes the ATP-dependent amination of UTP to CTP with either L-glutamine or ammonia as the source of nitrogen. Constitutes the rate-limiting enzyme in the synthesis of cytosine nucleotides. In Homo sapiens (Human), this protein is CTP synthase 2 (CTPS2).